Here is a 345-residue protein sequence, read N- to C-terminus: Protein RecA (345 aa).

Position 67–74 (67–74 (GPESSGKT)) interacts with ATP.

The protein belongs to the RecA family.

Its subcellular location is the cytoplasm. Its function is as follows. Can catalyze the hydrolysis of ATP in the presence of single-stranded DNA, the ATP-dependent uptake of single-stranded DNA by duplex DNA, and the ATP-dependent hybridization of homologous single-stranded DNAs. It interacts with LexA causing its activation and leading to its autocatalytic cleavage. In Acidothermus cellulolyticus (strain ATCC 43068 / DSM 8971 / 11B), this protein is Protein RecA.